The following is a 1567-amino-acid chain: ABC multidrug transporter MDR1 (1567 aa).

Residues 1-11 (MASQPPQPPSG) are compositionally biased toward pro residues. Residues 1–37 (MASQPPQPPSGQPDTQYEEYQSEVITETTNRPTPAAD) form a disordered region. Residues 22 to 32 (SEVITETTNRP) are compositionally biased toward polar residues. 3 N-linked (GlcNAc...) asparagine glycosylation sites follow: Asn-149, Asn-157, and Asn-356. Residues 167-432 (VQYQDTFLSP…FEEMGWYCPP (266 aa)) form the ABC transporter 1 domain. The next 6 helical transmembrane spans lie at 543–563 (STIATNISQIMMALIIGSLFF), 571–591 (GFFAKGSVIFFAILLNGLMSI), 636–656 (IPIKFLLALVFNIIIYFLGGL), 661–681 (AKFFIFFLFTFITILTMSAIF), 691–711 (IPQALALAGVMILALVIYTGF), and 798–818 (LGILLGFLAFFYFVYLVVSEL). N-linked (GlcNAc...) asparagine glycosylation is found at Asn-819, Asn-895, and Asn-912. Residues 891–1134 (FTWRNVTYDI…LLNYFETHGA (244 aa)) enclose the ABC transporter 2 domain. 927-934 (GVSGAGKT) contacts ATP. A disordered region spans residues 1172–1202 (ESRHVQQELDRIQSETSKRNEGHGQSAEKEP). The helical transmembrane segment at 1231–1251 (IWGKLLLGLTSALFIGFSFFL) threads the bilayer. Asn-1253 carries an N-linked (GlcNAc...) asparagine glycan. The next 5 helical transmembrane spans lie at 1257 to 1277 (AGLQNSLFSIFMLTTIFSSLV), 1305 to 1325 (VFLLANIIVEIPYQILLGIIA), 1345 to 1365 (ILLLYCVQFFIFASTFAQMII), 1372 to 1392 (ETAGGIATTMFGLMVTFNGVL), and 1498 to 1518 (GIGWAYIVFNIFATVALYYLI).

The protein belongs to the ABC transporter superfamily. ABCG family. PDR (TC 3.A.1.205) subfamily.

The protein localises to the cell membrane. The enzyme catalyses voriconazole(in) + ATP + H2O = voriconazole(out) + ADP + phosphate + H(+). It carries out the reaction fluconazole(in) + ATP + H2O = fluconazole(out) + ADP + phosphate + H(+). It catalyses the reaction (R)-miconazole(in) + ATP + H2O = (R)-miconazole(out) + ADP + phosphate + H(+). The catalysed reaction is (S)-miconazole(in) + ATP + H2O = (S)-miconazole(out) + ADP + phosphate + H(+). In terms of biological role, pleiotropic ABC efflux transporter that may be involved in the modulation susceptibility to a wide range of unrelated cytotoxic compounds. This is ABC multidrug transporter MDR1 from Trichophyton equinum (strain ATCC MYA-4606 / CBS 127.97) (Horse ringworm fungus).